Reading from the N-terminus, the 91-residue chain is Antifungal protein opdH (91 aa).

The first 18 residues, 1–18, serve as a signal peptide directing secretion; sequence MQFSSLSLVFLAVIGAIA. Positions 19–33 are excised as a propeptide; it reads NPIAVDSELENRDVQ. Cystine bridges form between cysteine 41-cysteine 69, cysteine 48-cysteine 76, and cysteine 61-cysteine 87.

It belongs to the antifungal protein pafB family.

It localises to the secreted. The protein localises to the host cytoplasm. Functionally, antifungal protein; part of the gene cluster that mediates the biosynthesis of oxopyrrolidines, polyketide-amino acid hybrid compounds with feature structures of tetramic acid. Acts as an inhibitor of growth of various molds and yeasts. The protein is Antifungal protein opdH of Penicillium oxalicum (strain 114-2 / CGMCC 5302) (Penicillium decumbens).